The chain runs to 1515 residues: Apolipophorin (1515 aa).

Residues 952–1118 (LRGVVVNGQH…NSYRLASSCP (167 aa)) enclose the VWFD domain. The cysteines at positions 976 and 1117 are disulfide-linked. A glycan (N-linked (GlcNAc...) asparagine) is linked at Asn-988.

Hemolymph.

It is found in the secreted. In terms of biological role, mediates transport for various types of lipids in hemolymph. Acts by forming lipoprotein particles that bind lipoproteins and lipids. Binds the A.niger cell wall component alpha-1,3-glucan, a fungal pathogen-associated molecular pattern (PAMP) that activates the host immune response. This is Apolipophorin from Galleria mellonella (Greater wax moth).